We begin with the raw amino-acid sequence, 273 residues long: MENRKNYFHLHLISDSTGETLIAAGRAAAAQFQSSHALEHVYPLIRNRKQLMQVMDAVDGAPGIVLYTIVDRELAGLIDQRCREIGVPCVSVLDPIIELFQSYLGSPSRRRSGAQHVMDAEYFARIEALNFTMDHDDGQVPSDFNEADVVLVGVSRTSKTPTSIYLANRGIKTANIPIVPGVPLPDALLKATKPLIVGLIASAERLSQVRQHRVLGTTQSFHGEDYTDRAAIAEELKYARSLCARNNWPLIDVTRRSIEETAAAIVALRPRLR.

153–160 (GVSRTSKT) serves as a coordination point for ADP.

Belongs to the pyruvate, phosphate/water dikinase regulatory protein family. PDRP subfamily.

The catalysed reaction is N(tele)-phospho-L-histidyl/L-threonyl-[pyruvate, phosphate dikinase] + ADP = N(tele)-phospho-L-histidyl/O-phospho-L-threonyl-[pyruvate, phosphate dikinase] + AMP + H(+). It carries out the reaction N(tele)-phospho-L-histidyl/O-phospho-L-threonyl-[pyruvate, phosphate dikinase] + phosphate + H(+) = N(tele)-phospho-L-histidyl/L-threonyl-[pyruvate, phosphate dikinase] + diphosphate. In terms of biological role, bifunctional serine/threonine kinase and phosphorylase involved in the regulation of the pyruvate, phosphate dikinase (PPDK) by catalyzing its phosphorylation/dephosphorylation. In Rhizobium meliloti (strain 1021) (Ensifer meliloti), this protein is Putative pyruvate, phosphate dikinase regulatory protein.